The chain runs to 285 residues: Bifunctional protein FolD (285 aa).

NADP(+) is bound by residues 163-165 and Ser188; that span reads GRS.

The protein belongs to the tetrahydrofolate dehydrogenase/cyclohydrolase family. Homodimer.

It catalyses the reaction (6R)-5,10-methylene-5,6,7,8-tetrahydrofolate + NADP(+) = (6R)-5,10-methenyltetrahydrofolate + NADPH. It carries out the reaction (6R)-5,10-methenyltetrahydrofolate + H2O = (6R)-10-formyltetrahydrofolate + H(+). The protein operates within one-carbon metabolism; tetrahydrofolate interconversion. Functionally, catalyzes the oxidation of 5,10-methylenetetrahydrofolate to 5,10-methenyltetrahydrofolate and then the hydrolysis of 5,10-methenyltetrahydrofolate to 10-formyltetrahydrofolate. This Lactococcus lactis subsp. cremoris (strain MG1363) protein is Bifunctional protein FolD.